Reading from the N-terminus, the 476-residue chain is tRNA(Ile)-lysidine synthase (476 aa).

30 to 35 is a binding site for ATP; it reads SGGPDS.

Belongs to the tRNA(Ile)-lysidine synthase family.

It is found in the cytoplasm. The catalysed reaction is cytidine(34) in tRNA(Ile2) + L-lysine + ATP = lysidine(34) in tRNA(Ile2) + AMP + diphosphate + H(+). Functionally, ligates lysine onto the cytidine present at position 34 of the AUA codon-specific tRNA(Ile) that contains the anticodon CAU, in an ATP-dependent manner. Cytidine is converted to lysidine, thus changing the amino acid specificity of the tRNA from methionine to isoleucine. The protein is tRNA(Ile)-lysidine synthase of Bacillus thuringiensis subsp. konkukian (strain 97-27).